Reading from the N-terminus, the 93-residue chain is uncharacterized protein (93 aa).

2 helical membrane-spanning segments follow: residues 7-27 (LIFL…LGMI) and 70-90 (ILSV…AFGI).

Its subcellular location is the cell membrane. This is an uncharacterized protein from Methanocaldococcus jannaschii (strain ATCC 43067 / DSM 2661 / JAL-1 / JCM 10045 / NBRC 100440) (Methanococcus jannaschii).